The chain runs to 367 residues: Leu/Ile/Val-binding protein (367 aa).

Positions Met-1–Ala-23 are cleaved as a signal peptide. Cys-76 and Cys-101 are oxidised to a cystine.

Belongs to the leucine-binding protein family.

The protein localises to the periplasm. Its function is as follows. This protein is a component of the leucine, isoleucine, valine, (threonine) transport system, which is one of the two periplasmic binding protein-dependent transport systems of the high-affinity transport of the branched-chain amino acids. This Escherichia coli O157:H7 protein is Leu/Ile/Val-binding protein (livJ).